Consider the following 215-residue polypeptide: LysM and putative peptidoglycan-binding domain-containing protein 2 (215 aa).

Residues M1–E40 form a disordered region. A2 carries the N-acetylalanine modification. S5, S24, S34, and S58 each carry phosphoserine. Over residues P20–H29 the composition is skewed to pro residues. The LysM domain maps to V72–I116. The interval A194 to S215 is disordered.

The protein is LysM and putative peptidoglycan-binding domain-containing protein 2 (LYSMD2) of Bos taurus (Bovine).